The primary structure comprises 204 residues: ATP-dependent Clp protease proteolytic subunit (204 aa).

Ser101 (nucleophile) is an active-site residue. His126 is an active-site residue.

This sequence belongs to the peptidase S14 family. As to quaternary structure, component of the chloroplastic Clp protease core complex.

It localises to the plastid. It is found in the chloroplast stroma. It catalyses the reaction Hydrolysis of proteins to small peptides in the presence of ATP and magnesium. alpha-casein is the usual test substrate. In the absence of ATP, only oligopeptides shorter than five residues are hydrolyzed (such as succinyl-Leu-Tyr-|-NHMec, and Leu-Tyr-Leu-|-Tyr-Trp, in which cleavage of the -Tyr-|-Leu- and -Tyr-|-Trp bonds also occurs).. Cleaves peptides in various proteins in a process that requires ATP hydrolysis. Has a chymotrypsin-like activity. Plays a major role in the degradation of misfolded proteins. The chain is ATP-dependent Clp protease proteolytic subunit from Phalaenopsis aphrodite subsp. formosana (Moth orchid).